The chain runs to 253 residues: Tetraspanin-11 (253 aa).

Transmembrane regions (helical) follow at residues 19–39 (LLFV…AVGI), 63–83 (ILIF…GAIL), and 93–113 (YFCL…LAHV). N-linked (GlcNAc...) asparagine glycosylation occurs at asparagine 127. Residues 220 to 240 (LLLMGAVGIGVACLQICGMVL) form a helical membrane-spanning segment.

The protein belongs to the tetraspanin (TM4SF) family.

Its subcellular location is the membrane. The protein is Tetraspanin-11 (TSPAN11) of Homo sapiens (Human).